Consider the following 398-residue polypeptide: uncharacterized protein (398 aa).

In terms of domain architecture, CobW C-terminal spans 235-351 (VAIVEFSARR…DIVNALNAAL (117 aa)).

This is an uncharacterized protein from Mycobacterium bovis (strain ATCC BAA-935 / AF2122/97).